We begin with the raw amino-acid sequence, 363 residues long: mRNA decay activator protein ZFP36L2-A (363 aa).

The RNA-binding signature appears at 131–136; the sequence is RYKTEL. 2 consecutive C3H1-type zinc fingers follow at residues 131–159 and 169–197; these read RYKT…HGFH and KYKT…HNAE. An RNA-binding region spans residues 148-189; sequence YGEKCQFAHGFHELRSLTRHPKYKTELCRTFHTIGFCPYGPR. Positions 308–349 are disordered; sequence ESPVFDAPPSPPDSLSDRDSYLSGSLSSGSLSGSDSPTLDSN. Low complexity predominate over residues 328–347; it reads YLSGSLSSGSLSGSDSPTLD.

Post-translationally, phosphorylated. In terms of tissue distribution, widely expressed in adults.

The protein localises to the nucleus. Its subcellular location is the cytoplasm. Its function is as follows. Zinc-finger RNA-binding protein that destabilizes several cytoplasmic AU-rich element (ARE)-containing mRNA transcripts by promoting their poly(A) tail removal or deadenylation, and hence provide a mechanism for attenuating protein synthesis. Acts as a 3'-untranslated region (UTR) ARE mRNA-binding adapter protein to communicate signaling events to the mRNA decay machinery. Functions by recruiting the CCR4-NOT deadenylase complex and probably other components of the cytoplasmic RNA decay machinery to the bound ARE-containing mRNAs, and hence promotes ARE-mediated mRNA deadenylation and decay processes. Binds to 3'-UTR ARE of numerous mRNAs. Also induces the degradation of ARE-containing mRNAs even in absence of poly(A) tail. Required for tubulogenesis during pronephros development. The sequence is that of mRNA decay activator protein ZFP36L2-A (zfp36l2-A) from Xenopus laevis (African clawed frog).